Reading from the N-terminus, the 558-residue chain is Kelch-like protein 23 (558 aa).

The 69-residue stretch at 36–104 (TDITLQCPSG…AYTSQIEITK (69 aa)) folds into the BTB domain. The 102-residue stretch at 139–240 (CIGMHSFAEF…DPVYLKTALG (102 aa)) folds into the BACK domain. Kelch repeat units follow at residues 274 to 320 (TMYI…CLGP), 321 to 369 (NIYV…TLGG), 370 to 416 (CVYA…VLHD), 418 to 466 (IYVI…PFEN), 467 to 508 (KLYL…IMNG), and 510 to 557 (IYVT…CVYN).

In Homo sapiens (Human), this protein is Kelch-like protein 23 (KLHL23).